Reading from the N-terminus, the 232-residue chain is Putative dimethylsulfoniopropionate lyase DddL (232 aa).

Positions 154, 159, 161, and 190 each coordinate a divalent metal cation.

This sequence belongs to the non-heme iron-dependent dioxygenase family. As to quaternary structure, homodimer. Requires a divalent metal cation as cofactor.

It carries out the reaction S,S-dimethyl-beta-propiothetin = acrylate + dimethyl sulfide + H(+). Functionally, may cleave dimethylsulfoniopropionate (DMSP), releasing dimethyl sulfide (DMS). DMS is the principal form by which sulfur is transported from oceans to the atmosphere. The real activity of the protein is however subject to debate and it is unclear whether it constitutes a real dimethylsulfoniopropionate lyase in vivo. This Cereibacter sphaeroides (strain ATCC 17023 / DSM 158 / JCM 6121 / CCUG 31486 / LMG 2827 / NBRC 12203 / NCIMB 8253 / ATH 2.4.1.) (Rhodobacter sphaeroides) protein is Putative dimethylsulfoniopropionate lyase DddL (dddL).